The chain runs to 214 residues: GTP-binding nuclear protein GSP1/Ran (214 aa).

In terms of domain architecture, Small GTPase Ran-type spans 4-168 (EVPTFKLVLV…LWLARKLAGN (165 aa)). 15 to 22 (DGGTGKTT) serves as a coordination point for GTP. Residues 34-42 (KKYIATIGV) form a switch-I region. GTP-binding positions include glycine 65, 119–122 (NKVD), and 147–149 (SAK). The interval 65-81 (GQEKFGGLRDGYYINAQ) is switch-II.

Belongs to the small GTPase superfamily. Ran family. Found in a nuclear export complex with RanGTP, exportin and pre-miRNA.

The protein resides in the nucleus. GTP-binding protein involved in nucleocytoplasmic transport. Required for the import of protein into the nucleus and also for RNA export. Involved in chromatin condensation and control of cell cycle. In Candida glabrata (strain ATCC 2001 / BCRC 20586 / JCM 3761 / NBRC 0622 / NRRL Y-65 / CBS 138) (Yeast), this protein is GTP-binding nuclear protein GSP1/Ran (GSP1).